Here is a 404-residue protein sequence, read N- to C-terminus: Dihydroorotase (404 aa).

Residues His-57 and His-59 each coordinate Zn(2+). Substrate is bound by residues 59 to 61 and Asn-91; that span reads HLR. Zn(2+)-binding residues include Lys-135, His-164, His-204, and Asp-272. At Lys-135 the chain carries N6-carboxylysine. The active site involves Asp-272. Residues His-276 and 286–287 contribute to the substrate site; that span reads AG.

This sequence belongs to the metallo-dependent hydrolases superfamily. DHOase family. Class I DHOase subfamily. Zn(2+) is required as a cofactor.

It carries out the reaction (S)-dihydroorotate + H2O = N-carbamoyl-L-aspartate + H(+). Its pathway is pyrimidine metabolism; UMP biosynthesis via de novo pathway; (S)-dihydroorotate from bicarbonate: step 3/3. In terms of biological role, catalyzes the reversible cyclization of carbamoyl aspartate to dihydroorotate. This Pyrococcus abyssi (strain GE5 / Orsay) protein is Dihydroorotase.